The sequence spans 90 residues: U7-theraphotoxin-Hhn1a 4 (90 aa).

An N-terminal signal peptide occupies residues 1 to 19 (MKTAIFTVVLALAVFAVLS). The propeptide occupies 20-50 (FGWEANEEALSEEFTELIHEKEAASETEARE). 3 cysteine pairs are disulfide-bonded: Cys-51–Cys-65, Cys-58–Cys-70, and Cys-64–Cys-81.

The protein belongs to the neurotoxin 10 (Hwtx-1) family. 13 (Hntx-13) subfamily. As to expression, expressed by the venom gland.

It localises to the secreted. Ion channel inhibitor. The polypeptide is U7-theraphotoxin-Hhn1a 4 (Cyriopagopus hainanus (Chinese bird spider)).